A 184-amino-acid chain; its full sequence is ATP synthase subunit b, chloroplastic (184 aa).

Residues 27 to 49 (LATNPINLSVVLGVLIFFGKGVL) traverse the membrane as a helical segment.

The protein belongs to the ATPase B chain family. As to quaternary structure, F-type ATPases have 2 components, F(1) - the catalytic core - and F(0) - the membrane proton channel. F(1) has five subunits: alpha(3), beta(3), gamma(1), delta(1), epsilon(1). F(0) has four main subunits: a(1), b(1), b'(1) and c(10-14). The alpha and beta chains form an alternating ring which encloses part of the gamma chain. F(1) is attached to F(0) by a central stalk formed by the gamma and epsilon chains, while a peripheral stalk is formed by the delta, b and b' chains.

The protein resides in the plastid. The protein localises to the chloroplast thylakoid membrane. Its function is as follows. F(1)F(0) ATP synthase produces ATP from ADP in the presence of a proton or sodium gradient. F-type ATPases consist of two structural domains, F(1) containing the extramembraneous catalytic core and F(0) containing the membrane proton channel, linked together by a central stalk and a peripheral stalk. During catalysis, ATP synthesis in the catalytic domain of F(1) is coupled via a rotary mechanism of the central stalk subunits to proton translocation. In terms of biological role, component of the F(0) channel, it forms part of the peripheral stalk, linking F(1) to F(0). This chain is ATP synthase subunit b, chloroplastic, found in Oenothera argillicola (Appalachian evening primrose).